We begin with the raw amino-acid sequence, 93 residues long: UPF0337 protein Bd3330 (93 aa).

Belongs to the UPF0337 (CsbD) family.

The polypeptide is UPF0337 protein Bd3330 (Bdellovibrio bacteriovorus (strain ATCC 15356 / DSM 50701 / NCIMB 9529 / HD100)).